The primary structure comprises 802 residues: Copper-exporting P-type ATPase (802 aa).

HMA domains are found at residues 5-70 and 72-138; these read KKTT…YGVT and ETVE…YDAS. Cu(+) contacts are provided by cysteine 16, cysteine 19, cysteine 83, and cysteine 86. Helical transmembrane passes span 161–181, 192–212, 224–244, 256–276, 411–431, and 438–458; these read LIIS…HLFN, WFQF…FYVG, MDVL…YEMV, LYFE…YLEA, YFVP…ITLV, and PALV…LGLA. Aspartate 495 (4-aspartylphosphate intermediate) is an active-site residue. Positions 690 and 694 each coordinate Mg(2+). 2 helical membrane-spanning segments follow: residues 748-767 and 771-790; these read LFWA…LGLL and VAGA…ALRL.

It belongs to the cation transport ATPase (P-type) (TC 3.A.3) family. Type IB subfamily.

It is found in the cell membrane. The catalysed reaction is Cu(+)(in) + ATP + H2O = Cu(+)(out) + ADP + phosphate + H(+). Its function is as follows. Involved in copper export. The protein is Copper-exporting P-type ATPase (copA) of Staphylococcus aureus (strain N315).